Consider the following 336-residue polypeptide: Dihydroorotate dehydrogenase (quinone) (336 aa).

Residues 62–66 and T86 each bind FMN; that span reads AGLDK. Residue K66 coordinates substrate. Substrate is bound at residue 111–115; it reads NRMGF. FMN-binding residues include N139 and N172. N172 serves as a coordination point for substrate. S175 functions as the Nucleophile in the catalytic mechanism. Position 177 (N177) interacts with substrate. The FMN site is built by K217 and T245. 246–247 is a substrate binding site; sequence NT. FMN contacts are provided by residues G268, G297, and 318 to 319; that span reads YS.

The protein belongs to the dihydroorotate dehydrogenase family. Type 2 subfamily. In terms of assembly, monomer. It depends on FMN as a cofactor.

It is found in the cell membrane. It carries out the reaction (S)-dihydroorotate + a quinone = orotate + a quinol. The protein operates within pyrimidine metabolism; UMP biosynthesis via de novo pathway; orotate from (S)-dihydroorotate (quinone route): step 1/1. In terms of biological role, catalyzes the conversion of dihydroorotate to orotate with quinone as electron acceptor. The sequence is that of Dihydroorotate dehydrogenase (quinone) from Sodalis glossinidius (strain morsitans).